The sequence spans 278 residues: TnpB-like protein MJ0751 (278 aa).

The Zn(2+) site is built by Cys222, Cys225, Cys239, and Cys242.

It in the N-terminal section; belongs to the transposase 2 family. The protein in the C-terminal section; belongs to the transposase 35 family.

The sequence is that of TnpB-like protein MJ0751 from Methanocaldococcus jannaschii (strain ATCC 43067 / DSM 2661 / JAL-1 / JCM 10045 / NBRC 100440) (Methanococcus jannaschii).